The primary structure comprises 436 residues: Serine/threonine-protein kinase STK11 (436 aa).

Serine 31 carries the post-translational modification Phosphoserine. Lysine 44 and lysine 48 each carry N6-acetyllysine. The interval 45-90 (LIGKYLMGDLLGEGSYGKVKEVLDSETLCRRAVKILKKKKLRRIPN) is sufficient for interaction with SIRT1. In terms of domain architecture, Protein kinase spans 49 to 309 (YLMGDLLGEG…IRQIRQHSWF (261 aa)). ATP-binding positions include 55–63 (LGEGSYGKV) and lysine 78. 2 positions are modified to N6-acetyllysine: lysine 96 and lysine 97. Residue aspartate 176 is the Proton acceptor of the active site. Position 189 is a phosphothreonine; by autocatalysis (threonine 189). Lysine 296 and lysine 311 each carry N6-acetyllysine. Serine 325 bears the Phosphoserine mark. Threonine 336 carries the phosphothreonine; by autocatalysis modification. Threonine 366 is modified (phosphothreonine; by ATM and autocatalysis). Positions 397-421 (GTEPQLSSKVKPEGRPGAANPARKV) are disordered. Position 403 is a phosphoserine (serine 403). Lysine 420 carries the post-translational modification N6-acetyllysine. Cysteine 422 carries the S-palmitoyl cysteine lipid modification. Lysine 426 bears the N6-acetyllysine mark. Serine 431 carries the post-translational modification Phosphoserine; by autocatalysis, PKA, PKC/PRKCZ and RPS6KA1. Position 433 is a cysteine methyl ester (cysteine 433). Residue cysteine 433 is the site of S-farnesyl cysteine attachment. Position 434 is an N6-acetyllysine (lysine 434). Residues 434-436 (KQQ) constitute a propeptide, removed in mature form.

Belongs to the protein kinase superfamily. CAMK Ser/Thr protein kinase family. LKB1 subfamily. In terms of assembly, catalytic component of a trimeric complex composed of STK11/LKB1, STRAD (STRADA or STRADB) and CAB39/MO25 (CAB39/MO25alpha or CAB39L/MO25beta): the complex tethers STK11/LKB1 in the cytoplasm and stimulates its catalytic activity. Found in a ternary complex composed of SMAD4, STK11/LKB1 and STK11IP. Interacts with NR4A1, p53/TP53, SMAD4, STK11IP and WDR6. Interacts with NISCH; this interaction may increase STK11 activity. Interacts with SIRT1; the interaction deacetylates STK11. Interacts with CDKN1A. Requires Mg(2+) as cofactor. It depends on Mn(2+) as a cofactor. Post-translationally, phosphorylated by ATM at Thr-366 following ionizing radiation (IR). Phosphorylation at Ser-431 by RPS6KA1 and/or some PKA is required to inhibit cell growth. Phosphorylation at Ser-431 is also required during neuronal polarization to mediate phosphorylation of BRSK1 and BRSK2. Phosphorylation by PKC/PRKCZ at Ser-397 in isoform 2 promotes metformin (or peroxynitrite)-induced nuclear export of STK11 and activation of AMPK. UV radiation -induced phosphorylation at Thr-366 mediates CDKN1A degradation. In terms of processing, acetylated. Deacetylation at Lys-48 enhances cytoplasmic localization and kinase activity in vitro. Expressed in brain, heart, testis, skeletal muscle and spleen, and weakly in liver and kidney. Isoform 1 is expressed at highest levels in the brain. Isoform 2 is expressed at highest levels in the testis, primarily in postmitotic developing germ cells (at protein level).

The protein resides in the nucleus. Its subcellular location is the cytoplasm. It localises to the membrane. The protein localises to the mitochondrion. The catalysed reaction is L-seryl-[protein] + ATP = O-phospho-L-seryl-[protein] + ADP + H(+). The enzyme catalyses L-threonyl-[protein] + ATP = O-phospho-L-threonyl-[protein] + ADP + H(+). Activated by forming a complex with STRAD (STRADA or STRADB) and CAB39/MO25 (CAB39/MO25alpha or CAB39L/MO25beta): STRADA (or STRADB)-binding promotes a conformational change of STK11/LKB1 in an active conformation, which is stabilized by CAB39/MO25alpha (or CAB39L/MO25beta) interacting with the STK11/LKB1 activation loop. Sequestration in the nucleus by NR4A1 prevents it from phosphorylating and activating cytoplasmic AMPK. Its function is as follows. Tumor suppressor serine/threonine-protein kinase that controls the activity of AMP-activated protein kinase (AMPK) family members, thereby playing a role in various processes such as cell metabolism, cell polarity, apoptosis and DNA damage response. Acts by phosphorylating the T-loop of AMPK family proteins, thus promoting their activity: phosphorylates PRKAA1, PRKAA2, BRSK1, BRSK2, MARK1, MARK2, MARK3, MARK4, NUAK1, NUAK2, SIK1, SIK2, SIK3 and SNRK but not MELK. Also phosphorylates non-AMPK family proteins such as STRADA, PTEN and possibly p53/TP53. Acts as a key upstream regulator of AMPK by mediating phosphorylation and activation of AMPK catalytic subunits PRKAA1 and PRKAA2 and thereby regulates processes including: inhibition of signaling pathways that promote cell growth and proliferation when energy levels are low, glucose homeostasis in liver, activation of autophagy when cells undergo nutrient deprivation, and B-cell differentiation in the germinal center in response to DNA damage. Also acts as a regulator of cellular polarity by remodeling the actin cytoskeleton. Required for cortical neuron polarization by mediating phosphorylation and activation of BRSK1 and BRSK2, leading to axon initiation and specification. Involved in DNA damage response: interacts with p53/TP53 and recruited to the CDKN1A/WAF1 promoter to participate in transcription activation. Able to phosphorylate p53/TP53; the relevance of such result in vivo is however unclear and phosphorylation may be indirect and mediated by downstream STK11/LKB1 kinase NUAK1. Also acts as a mediator of p53/TP53-dependent apoptosis via interaction with p53/TP53: translocates to the mitochondrion during apoptosis and regulates p53/TP53-dependent apoptosis pathways. Regulates UV radiation-induced DNA damage response mediated by CDKN1A. In association with NUAK1, phosphorylates CDKN1A in response to UV radiation and contributes to its degradation which is necessary for optimal DNA repair. Functionally, has a role in spermiogenesis. The polypeptide is Serine/threonine-protein kinase STK11 (Rattus norvegicus (Rat)).